The primary structure comprises 281 residues: Undecaprenyl-diphosphatase (281 aa).

Helical transmembrane passes span 4–24, 45–65, 89–109, 113–133, 152–172, 190–210, 225–245, and 257–277; these read IEIL…WLPI, AFMS…VMVI, WLKV…DDWF, FHNM…FIYL, LPYT…LPGT, SVVT…ASAL, GQLF…MVAI, and FTLF…YSFV.

Belongs to the UppP family.

The protein localises to the cell membrane. The enzyme catalyses di-trans,octa-cis-undecaprenyl diphosphate + H2O = di-trans,octa-cis-undecaprenyl phosphate + phosphate + H(+). Functionally, catalyzes the dephosphorylation of undecaprenyl diphosphate (UPP). Confers resistance to bacitracin. The protein is Undecaprenyl-diphosphatase of Streptococcus pneumoniae (strain Hungary19A-6).